The following is a 123-amino-acid chain: UPF0342 protein LAR_1202 (123 aa).

The protein belongs to the UPF0342 family.

This Limosilactobacillus reuteri subsp. reuteri (strain JCM 1112) (Lactobacillus reuteri) protein is UPF0342 protein LAR_1202.